Here is a 441-residue protein sequence, read N- to C-terminus: COP9 signalosome complex subunit 1 (441 aa).

The segment at 1 to 28 (MERDEEASGPMMEMCTNGGEETSNRRPI) is disordered. A PCI domain is found at 230 to 400 (KYKLAARKFL…KILYARHADQ (171 aa)).

Belongs to the CSN1 family. Component of the CSN complex, probably composed of CSN1, CSN2, CSN3, CSN4, CSN5 (CSN5A or CSN5B), CSN6 (CSN6A or CSN6B), CSN7 and CSN8. Interacts with itself and (via PCI domain) with CSN7 (via PCI domain). In the CSN complex, it probably interacts directly with CSN2, CSN3, CSN4 and CSN5B. Interacts with the 26S proteasome subunit RPN6. Interacts (via N-terminal domain) with TSA1 (via C-terminal domain). Binds to the translation initiation factors TIF3C1, TIF3E1 and TIF3H1. In terms of tissue distribution, expressed in leaves, flowers, immature siliques, and light-grown roots.

It localises to the cytoplasm. The protein resides in the nucleus. In terms of biological role, component of the COP9 signalosome complex (CSN), a complex involved in various cellular and developmental processes such as photomorphogenesis and auxin and jasmonate responses. The CSN complex is an essential regulator of the ubiquitin (Ubl) conjugation pathway by mediating the deneddylation of the cullin subunits of SCF-type E3 ligase complexes, leading to decrease the Ubl ligase activity of SCF. It is involved in repression of photomorphogenesis in darkness by regulating the activity of COP1-containing Ubl ligase complexes. The complex is also required for degradation of IAA6 by regulating the activity of the Ubl ligase SCF-TIR complex. In the complex, it plays a central role in CSN assembly. This Arabidopsis thaliana (Mouse-ear cress) protein is COP9 signalosome complex subunit 1 (CSN1).